We begin with the raw amino-acid sequence, 663 residues long: Polyunsaturated fatty acid lipoxygenase ALOX15 (663 aa).

The PLAT domain maps to 2-115 (GVYRIRVSTG…ILSLPEGTGC (114 aa)). The 548-residue stretch at 116–663 (TVVEDSQGLF…PSMVENSVAI (548 aa)) folds into the Lipoxygenase domain. A Phosphoserine modification is found at S149. Fe cation-binding residues include H361, H366, H541, H545, and I663.

This sequence belongs to the lipoxygenase family. Interacts with PEBP1; in response to IL13/interleukin-13, prevents the interaction of PEBP1 with RAF1 to activate the ERK signaling cascade. Requires Fe cation as cofactor. As to expression, detected in leukocytes, lung and aorta.

The protein resides in the cytoplasm. It is found in the cytosol. It localises to the cell membrane. Its subcellular location is the lipid droplet. The catalysed reaction is (5Z,8Z,11Z,14Z)-eicosatetraenoate + O2 = (12S)-hydroperoxy-(5Z,8Z,10E,14Z)-eicosatetraenoate. It catalyses the reaction (5Z,8Z,11Z,14Z)-eicosatetraenoate + O2 = (15S)-hydroperoxy-(5Z,8Z,11Z,13E)-eicosatetraenoate. The enzyme catalyses (9Z,12Z)-octadecadienoate + O2 = (13S)-hydroperoxy-(9Z,11E)-octadecadienoate. It carries out the reaction (12S)-hydroperoxy-(5Z,8Z,10E,14Z)-eicosatetraenoate = (8S)-hydroxy-(11S,12S)-epoxy-(5Z,9E,14Z)-eicosatrienoate. The catalysed reaction is (5Z,8Z,11Z,14Z)-eicosatetraenoate + 2 O2 = (14R,15S)-dihydroperoxy-(5Z,8Z,10E,12E)-eicosatetraenoate. It catalyses the reaction (5Z,8Z,11Z,14Z)-eicosatetraenoate + 2 O2 = (8S,15S)-dihydroperoxy-(5Z,9E,11Z,13E)-eicosatetraenoate. The enzyme catalyses (14S,15R)-epoxy-(5Z,8Z,11Z)-eicosatrienoate + O2 = (8S)-hydroperoxy-(14S,15R)-epoxy-(5Z,9E,11Z)-eicosatrienoate. It carries out the reaction (14S,15R)-epoxy-(5Z,8Z,11Z)-eicosatrienoate + O2 = (12S)-hydroperoxy-(14S,15R)-epoxy-(5Z,8Z,10E)-eicosatrienoate. The catalysed reaction is (14R,15S)-epoxy-(5Z,8Z,11Z)-eicosatrienoate + O2 = (5S)-hydroperoxy-(14R,15S)-epoxy-(6E,8Z,11Z)-eicosatrienoate. It catalyses the reaction (14R,15S)-epoxy-(5Z,8Z,11Z)-eicosatrienoate + O2 = (12S)-hydroperoxy-(14R,15S)-epoxy-(5Z,8Z,10E)-eicosatrienoate. The enzyme catalyses (15R)-hydroperoxy-(5Z,8Z,11Z,13E)-eicosatetraenoate = 15-oxo-(5Z,8Z,11Z,13E)-eicosatetraenoate + H2O. It carries out the reaction (15S)-hydroperoxy-(5Z,8Z,11Z,13E)-eicosatetraenoate = (14S,15S)-epoxy-(5Z,8Z,10E,12E)-eicosatetraenoate + H2O. The catalysed reaction is (4Z,7Z,10Z,13Z,16Z)-docosapentaenoate + O2 = 14-hydroperoxy-(4Z,7Z,10Z,12E,16Z)-docosapentaenoate. It catalyses the reaction (7Z,10Z,13Z,16Z,19Z)-docosapentaenoate + O2 = 14-hydroperoxy-(7Z,10Z,12E,16Z,19Z)-docosapentaenoate. The enzyme catalyses (4Z,7Z,10Z,13Z,16Z,19Z)-docosahexaenoate + O2 = (14S)-hydroperoxy-(4Z,7Z,10Z,12E,16Z,19Z)-docosahexaenoate. It carries out the reaction (4Z,7Z,10Z,13Z,16Z,19Z)-docosahexaenoate + O2 = (17S)-hydroperoxy-(4Z,7Z,10Z,13Z,15E,19Z)-docosahexaenoate. The catalysed reaction is (7S)-hydroperoxy-(4Z,8E,10Z,13Z,16Z,19Z)-docosahexaenoate + O2 = (7S,14S)-dihydroperoxy-(4Z,8E,10Z,12E,16Z,19Z)-docosahexaenoate. It catalyses the reaction (7S)-hydroperoxy-(4Z,8E,10Z,13Z,16Z,19Z)-docosahexaenoate + O2 = (7S,17S)-dihydroperoxy-(4Z,8E,10Z,13Z,15E,19Z)-docosahexaenoate. The enzyme catalyses (4Z,7Z,10Z,13Z,16Z,19Z)-docosahexaenoate + O2 = (11S)-hydroperoxy-(4Z,7Z,9E,13Z,16Z,19Z)-docosahexaenoate. It carries out the reaction N-(5Z,8Z,11Z,14Z)-eicosatetraenoyl-taurine + O2 = N-(12S)-hydroperoxy-(5Z,8Z,10E,14Z)-eicosatetraenoyl-taurine. The catalysed reaction is N-(5Z,8Z,11Z,14Z)-eicosatetraenoyl-gamma-aminobutanoate + O2 = N-(12S)-hydroperoxy-(5Z,8Z,10E,14Z)-eicosatetraenoyl-gamma-aminobutanoate. It catalyses the reaction N-(5Z,8Z,11Z,14Z)-eicosatetraenoyl-glycine + O2 = N-(12S)-hydroperoxy-(5Z,8Z,10E,14Z)-eicosatetraenoyl-glycine. The enzyme catalyses N-(5Z,8Z,11Z,14Z)-eicosatetraenoyl-L-alanine + O2 = N-(12S)-hydroperoxy-(5Z,8Z,10E,14Z)-eicosatetraenoyl-alanine. It carries out the reaction N-(5Z,8Z,11Z,14Z)-eicosatetraenoyl-taurine + O2 = N-(15S)-hydroperoxy-(5Z,8Z,11Z,13E)-eicosatetraenoyl-taurine. The catalysed reaction is N-(5Z,8Z,11Z,14Z)-eicosatetraenoyl-gamma-aminobutanoate + O2 = N-(15S)-hydroperoxy-(5Z,8Z,11Z,13E)-eicosatetraenoyl-gamma-aminobutanoate. It catalyses the reaction N-(5Z,8Z,11Z,14Z)-eicosatetraenoyl-glycine + O2 = N-(15S)-hydroperoxy-(5Z,8Z,11Z,13E)-eicosatetraenoyl-glycine. The enzyme catalyses N-(5Z,8Z,11Z,14Z)-eicosatetraenoyl-L-alanine + O2 = N-(15S)-hydroperoxy-(5Z,8Z,11Z,13E)-eicosatetraenoyl-alanine. It functions in the pathway lipid metabolism; hydroperoxy eicosatetraenoic acid biosynthesis. In terms of biological role, non-heme iron-containing dioxygenase that catalyzes the stereo-specific peroxidation of free and esterified polyunsaturated fatty acids generating a spectrum of bioactive lipid mediators. It inserts peroxyl groups at C12 or C15 of arachidonate ((5Z,8Z,11Z,14Z)-eicosatetraenoate) producing both 12-hydroperoxyeicosatetraenoate/12-HPETE and 15-hydroperoxyeicosatetraenoate/15-HPETE. It may then act on 12-HPETE to produce hepoxilins, which may show pro-inflammatory properties. Can also peroxidize linoleate ((9Z,12Z)-octadecadienoate) to 13-hydroperoxyoctadecadienoate. May participate in the sequential oxidations of DHA ((4Z,7Z,10Z,13Z,16Z,19Z)-docosahexaenoate) to generate specialized pro-resolving mediators (SPMs)like resolvin D5 ((7S,17S)-diHPDHA) and (7S,14S)-diHPDHA, that actively down-regulate the immune response and have anti-aggregation properties with platelets. Can convert epoxy fatty acids to hydroperoxy-epoxides derivatives followed by an intramolecular nucleophilic substitution leading to the formation of monocyclic endoperoxides. Plays an important role during the maintenance of self-tolerance by peroxidizing membrane-bound phosphatidylethanolamine which can then signal the sorting process for clearance of apoptotic cells during inflammation and prevent an autoimmune response. In addition to its role in the immune and inflammatory responses, this enzyme may play a role in epithelial wound healing in the cornea through production of lipoxin A4 (LXA(4)) and docosahexaenoic acid-derived neuroprotectin D1 (NPD1; 10R,17S-HDHA), both lipid autacoids exhibit anti-inflammatory and neuroprotective properties. Furthermore, it may regulate actin polymerization which is crucial for several biological processes such as the phagocytosis of apoptotic cells. It is also implicated in the generation of endogenous ligands for peroxisome proliferator activated receptor (PPAR-gamma), hence modulating macrophage development and function. It may also exert a negative effect on skeletal development by regulating bone mass through this pathway. As well as participates in ER stress and downstream inflammation in adipocytes, pancreatic islets, and liver. Finally, it is also involved in the cellular response to IL13/interleukin-13. In Rattus norvegicus (Rat), this protein is Polyunsaturated fatty acid lipoxygenase ALOX15.